Here is a 528-residue protein sequence, read N- to C-terminus: GMP synthase [glutamine-hydrolyzing] (528 aa).

The region spanning Ser-13–Asp-204 is the Glutamine amidotransferase type-1 domain. Cys-90 acts as the Nucleophile in catalysis. Residues His-178 and Glu-180 contribute to the active site. In terms of domain architecture, GMPS ATP-PPase spans Trp-205–Arg-403. An ATP-binding site is contributed by Ser-232–Ser-238.

As to quaternary structure, homodimer.

The enzyme catalyses XMP + L-glutamine + ATP + H2O = GMP + L-glutamate + AMP + diphosphate + 2 H(+). Its pathway is purine metabolism; GMP biosynthesis; GMP from XMP (L-Gln route): step 1/1. Its function is as follows. Catalyzes the synthesis of GMP from XMP. This is GMP synthase [glutamine-hydrolyzing] from Prochlorococcus marinus subsp. pastoris (strain CCMP1986 / NIES-2087 / MED4).